We begin with the raw amino-acid sequence, 311 residues long: 33 kDa chaperonin (311 aa).

Cystine bridges form between cysteine 240/cysteine 242 and cysteine 273/cysteine 276.

The protein belongs to the HSP33 family. Under oxidizing conditions two disulfide bonds are formed involving the reactive cysteines. Under reducing conditions zinc is bound to the reactive cysteines and the protein is inactive.

It localises to the cytoplasm. Its function is as follows. Redox regulated molecular chaperone. Protects both thermally unfolding and oxidatively damaged proteins from irreversible aggregation. Plays an important role in the bacterial defense system toward oxidative stress. The sequence is that of 33 kDa chaperonin from Trichodesmium erythraeum (strain IMS101).